The following is a 135-amino-acid chain: C-type Lectin CRL (135 aa).

4 cysteine pairs are disulfide-bonded: C3/C14, C31/C131, C38/C133, and C106/C123. The 123-residue stretch at 10-132 (MNGLCYKIFN…CESKDAFLCQ (123 aa)) folds into the C-type lectin domain. Q96, D98, E104, N119, and D120 together coordinate Ca(2+). Positions 96–98 (QPD) match the Galactose-binding motif.

This sequence belongs to the true venom lectin family. In terms of assembly, homodimer; disulfide-linked. Expressed by the venom gland.

The protein localises to the secreted. Its function is as follows. Beta-galactoside and N-acetylgalactosamine (GalNAc) specific C-type lectin. This Crotalus ruber ruber (Red diamond rattlesnake) protein is C-type Lectin CRL.